The following is a 490-amino-acid chain: 5'-3' exonuclease PLD3 (490 aa).

The Cytoplasmic segment spans residues 1-38; sequence MKPKLMYQELKVPAEEPASELPMNEIEAWKAAEKKARW. A helical; Signal-anchor for type II membrane protein membrane pass occupies residues 39–59; it reads VLLVLILAVVGFGALMTQLFL. The Lumenal segment spans residues 60–490; sequence WEYGDLHLFG…DSVGNACRLL (431 aa). 2 cysteine pairs are disulfide-bonded: Cys77-Cys239 and Cys81-Cys237. N-linked (GlcNAc...) asparagine glycosylation is found at Asn97 and Asn132. In terms of domain architecture, PLD phosphodiesterase 1 spans 196–223; sequence THGVLHTKFWVVDQTHFYLGSANMDWRS. Catalysis depends on residues His201, Lys203, and Asp208. His201 functions as the Proton donor in the catalytic mechanism. Residues His201 and Lys203 each coordinate phosphate. Asn218 contributes to the phosphate binding site. Residues Asn236, Asn284, and Asn387 are each glycosylated (N-linked (GlcNAc...) asparagine). Residues Cys366 and Cys487 are joined by a disulfide bond. The 27-residue stretch at 411-437 folds into the PLD phosphodiesterase 2 domain; that stretch reads YARVNHNKYMVTERATYIGTSNWSGSY. His416 provides a ligand contact to phosphate. Catalysis depends on His416, which acts as the Nucleophile. Phe438 provides a ligand contact to Mg(2+).

This sequence belongs to the phospholipase D family. As to quaternary structure, homodimer. Interacts with APP. N-glycosylated. In terms of processing, proteolytically processed to a soluble form that is stable within endosomes and lysosomes. During transport through the secretory pathway becomes proteolysed by cysteine proteases, thereby releasing a stable soluble lysosomal lumenal polypeptide, whereas the transmembrane-bound fragment is rapidly degraded. Its transport route to lysosomes involves ubiquitination and the ESCRT complex. Post-translationally, ubiquitinated. Ubiquitination mediates sorting into lysosomes.

It is found in the endoplasmic reticulum membrane. It localises to the lysosome lumen. The protein resides in the early endosome membrane. Its subcellular location is the late endosome membrane. The protein localises to the golgi apparatus membrane. It is found in the endosome membrane. It catalyses the reaction Exonucleolytic cleavage in the 5'- to 3'-direction to yield nucleoside 3'-phosphates.. The enzyme catalyses a 5'-end 5'-dephospho-ribonucleotidyl-ribonucleotide-RNA + H2O = a ribonucleoside 3'-phosphate + a 5'-end dephospho-ribonucleoside-RNA + H(+). The catalysed reaction is a ribonucleoside 3'-phosphate-2'-3'-cyclophospho-GMP + H2O = a ribonucleoside 3'-phosphate + 2',3'-cyclophospho-GMP + H(+). It carries out the reaction a 5'-end 5'-dephospho-2'-deoxyribonucleotidyl-2'-deoxyribonucleotide in single-stranded DNA + H2O = a 5'-end dephospho-2'-deoxyribonucleoside in single-stranded DNA + a 2'-deoxyribonucleoside 3'-phosphate + H(+). It catalyses the reaction a 5'-end 5'-phospho-2'-deoxyribonucleotide in single-stranded DNA + H2O = a 5'-end 5'-dephospho-2'-deoxyribonucleotide in single-stranded DNA + phosphate. The enzyme catalyses a 3-lyso-sn-glycero-1-phospho-(3'-acyl-1'-sn-glycerol) + a 1-acyl-sn-glycerol = a 3-acyl-sn-glycero-1-phospho-(3'-acyl-1'-sn-glycerol) + glycerol. The catalysed reaction is 3-lyso-sn-glycero-1-phospho-(3'-(9Z-octadecenoyl)-1'-sn-glycerol) + 1-(9Z-octadecenoyl)-sn-glycerol = 3-(9Z-octadecenoyl)-sn-glycero-1-phospho-(3'-(9Z-octadecenoyl)-1'-sn-glycerol) + glycerol. 5'-&gt;3' exonuclease that hydrolyzes the phosphodiester bond of single-stranded DNA (ssDNA) and RNA molecules to form nucleoside 3'-monophosphates and 5'-end 5'-hydroxy deoxyribonucleotide/ribonucleotide fragments. Partially redundant with PLD4, can cleave all four nucleotides displaying higher efficiency for ssDNA and RNA fragments initiated with uridine and guanosine residues and lower efficiency for cytidine-initiated substrates. As a result, it does not always degrade polynucleotides to the single nucleotide level, it can stall at specific sites sparing certain fragments from exonucleolytic degradation. Processes self and pathogenic ssDNA and RNA molecules that reach the endolysosomal compartment via phagocytosis or autophagy and may serve as 'danger' signals for recognition by innate immune receptors such as toll-like receptors (TLRs). Degrades mitochondrial CpG-rich ssDNA fragments to prevent TLR9 activation and autoinflammatory response, but it can cleave viral RNA to generate ligands for TLR7 activation and initiate antiviral immune responses. In plasmacytoid dendritic cells, it cooperates with endonuclease RNASET2 to release 2',3'-cyclic guanosine monophosphate (2',3'-cGMP), a potent stimulatory ligand for TLR7. Produces 2',3'-cGMPs and cytidine-rich RNA fragments that occupy TLR7 ligand-binding pockets and trigger a signaling-competent state. Can exert polynucleotide phosphatase activity toward 5'-phosphorylated ssDNA substrates although at a slow rate. Transphosphatidylase that catalyzes the exchange with R to S stereo-inversion of the glycerol moiety between (S,R)-lysophosphatidylglycerol (LPG) and monoacylglycerol (MAG) substrates to yield (S,S)-bis(monoacylglycero)phosphate (BMP). Can synthesize a variety of (S,S)-BMPs representing the main phospholipid constituent of lysosomal intralumenal vesicle (ILV) membranes that bind acid hydrolases for lipid degradation. Regulates the homeostasis and interorganellar communication of the endolysosomal system with an overall impact on cellular removal of dysfunctional organelles via autophagy as well as proper protein and lipid turnover. May play a role in myotube formation in response to ER stress. The chain is 5'-3' exonuclease PLD3 (PLD3) from Bos taurus (Bovine).